Here is a 198-residue protein sequence, read N- to C-terminus: Recombination protein RecR (198 aa).

The segment at 57 to 72 (CAMCNTFTEHEVCETC) adopts a C4-type zinc-finger fold. The Toprim domain maps to 80 to 175 (ALLCVVETPG…KVSRLARGVP (96 aa)).

The protein belongs to the RecR family.

Functionally, may play a role in DNA repair. It seems to be involved in an RecBC-independent recombinational process of DNA repair. It may act with RecF and RecO. The chain is Recombination protein RecR from Janthinobacterium sp. (strain Marseille) (Minibacterium massiliensis).